The following is a 208-amino-acid chain: ATP-dependent Clp protease proteolytic subunit (208 aa).

The Nucleophile role is filled by Ser-106. The active site involves His-131.

It belongs to the peptidase S14 family. In terms of assembly, fourteen ClpP subunits assemble into 2 heptameric rings which stack back to back to give a disk-like structure with a central cavity, resembling the structure of eukaryotic proteasomes.

The protein localises to the cytoplasm. The catalysed reaction is Hydrolysis of proteins to small peptides in the presence of ATP and magnesium. alpha-casein is the usual test substrate. In the absence of ATP, only oligopeptides shorter than five residues are hydrolyzed (such as succinyl-Leu-Tyr-|-NHMec, and Leu-Tyr-Leu-|-Tyr-Trp, in which cleavage of the -Tyr-|-Leu- and -Tyr-|-Trp bonds also occurs).. In terms of biological role, cleaves peptides in various proteins in a process that requires ATP hydrolysis. Has a chymotrypsin-like activity. Plays a major role in the degradation of misfolded proteins. The chain is ATP-dependent Clp protease proteolytic subunit from Dinoroseobacter shibae (strain DSM 16493 / NCIMB 14021 / DFL 12).